We begin with the raw amino-acid sequence, 460 residues long: Argininosuccinate lyase (460 aa).

Belongs to the lyase 1 family. Argininosuccinate lyase subfamily.

The protein localises to the cytoplasm. It catalyses the reaction 2-(N(omega)-L-arginino)succinate = fumarate + L-arginine. It functions in the pathway amino-acid biosynthesis; L-arginine biosynthesis; L-arginine from L-ornithine and carbamoyl phosphate: step 3/3. This chain is Argininosuccinate lyase, found in Solibacter usitatus (strain Ellin6076).